We begin with the raw amino-acid sequence, 566 residues long: ATP-binding protein SyrD (566 aa).

Residues 22–301 (HPWLTFFTLL…LVSAMPMLAQ (280 aa)) form the ABC transmembrane type-1 domain. Helical transmembrane passes span 24–44 (WLTF…IAVV), 61–81 (LFWF…ASLF), 132–152 (LLIM…IAYL), 158–178 (VVFA…LLFF), 250–270 (QLTL…FAVI), and 279–299 (VLAV…MPML). In terms of domain architecture, ABC transporter spans 343–566 (IQLKNVHMNY…VKCAVEGKRA (224 aa)). Residue 380-387 (GGNGCGKS) coordinates ATP.

It belongs to the ABC transporter superfamily. Dimer.

It is found in the cell inner membrane. Its function is as follows. ATP-driven efflux pump necessary for the secretion of syringomycin. May specifically bind syringomycin and translocate it to the periplasmic space. SyrD is also required for full expression of the syrB gene. This chain is ATP-binding protein SyrD (syrD), found in Pseudomonas syringae pv. syringae.